We begin with the raw amino-acid sequence, 446 residues long: tRNA-2-methylthio-N(6)-dimethylallyladenosine synthase (446 aa).

The 117-residue stretch at 8–124 (KTYRVKSFGC…LPGMIDAAVA (117 aa)) folds into the MTTase N-terminal domain. Residues Cys-17, Cys-53, Cys-87, Cys-160, Cys-164, and Cys-167 each contribute to the [4Fe-4S] cluster site. Residues 146-378 (RKSAPSAFLT…QAALNRDQAA (233 aa)) enclose the Radical SAM core domain. Positions 381–442 (AGSVGRTCEV…PNSLAGQLLE (62 aa)) constitute a TRAM domain.

This sequence belongs to the methylthiotransferase family. MiaB subfamily. Monomer. [4Fe-4S] cluster serves as cofactor.

It localises to the cytoplasm. The enzyme catalyses N(6)-dimethylallyladenosine(37) in tRNA + (sulfur carrier)-SH + AH2 + 2 S-adenosyl-L-methionine = 2-methylsulfanyl-N(6)-dimethylallyladenosine(37) in tRNA + (sulfur carrier)-H + 5'-deoxyadenosine + L-methionine + A + S-adenosyl-L-homocysteine + 2 H(+). Catalyzes the methylthiolation of N6-(dimethylallyl)adenosine (i(6)A), leading to the formation of 2-methylthio-N6-(dimethylallyl)adenosine (ms(2)i(6)A) at position 37 in tRNAs that read codons beginning with uridine. This is tRNA-2-methylthio-N(6)-dimethylallyladenosine synthase from Erythrobacter litoralis (strain HTCC2594).